The sequence spans 765 residues: Protein BCH2 (765 aa).

The interval 1-31 is disordered; the sequence is MSFLWGSTKSKKGKNKKAAGSLPSGVVPQQR. Residues 735 to 765 form a CHS5-binding region; that stretch reads LECLSKNRNEACLAYERPLPDLPSTIKPLAD.

This sequence belongs to the CHAPS family. As to quaternary structure, component of the CHS5/6 complex composed of the 4 CHAPS proteins BCH1, BCH2, BUD7, and CHS6 as well as at least CHS5 and GTP-bound ARF1. The complex interacts with the cargo protein CHS3.

Its subcellular location is the golgi apparatus. It is found in the trans-Golgi network membrane. Its function is as follows. Member of the CHS5-ARF1P-binding proteins (CHAPS) which mediates export of specific cargo proteins, including chitin synthase CHS3. The protein is Protein BCH2 (BCH2) of Saccharomyces cerevisiae (strain ATCC 204508 / S288c) (Baker's yeast).